A 94-amino-acid chain; its full sequence is Cell division topological specificity factor (94 aa).

The protein belongs to the MinE family.

Functionally, prevents the cell division inhibition by proteins MinC and MinD at internal division sites while permitting inhibition at polar sites. This ensures cell division at the proper site by restricting the formation of a division septum at the midpoint of the long axis of the cell. The chain is Cell division topological specificity factor from Clostridioides difficile (strain 630) (Peptoclostridium difficile).